The following is a 77-amino-acid chain: RNA-binding protein Hfq (77 aa).

The 61-residue stretch at 9–69 (DQFLNQLRKE…ISTFAPQKNV (61 aa)) folds into the Sm domain.

The protein belongs to the Hfq family. In terms of assembly, homohexamer.

Its function is as follows. RNA chaperone that binds small regulatory RNA (sRNAs) and mRNAs to facilitate mRNA translational regulation in response to envelope stress, environmental stress and changes in metabolite concentrations. Also binds with high specificity to tRNAs. The sequence is that of RNA-binding protein Hfq from Shouchella clausii (strain KSM-K16) (Alkalihalobacillus clausii).